The sequence spans 544 residues: Chaperonin GroEL 2 (544 aa).

ATP-binding positions include 29 to 32 (TLGP), 86 to 90 (DGTTT), Gly413, 479 to 481 (NAA), and Asp495.

The protein belongs to the chaperonin (HSP60) family. As to quaternary structure, forms a cylinder of 14 subunits composed of two heptameric rings stacked back-to-back. Interacts with the co-chaperonin GroES.

It localises to the cytoplasm. The enzyme catalyses ATP + H2O + a folded polypeptide = ADP + phosphate + an unfolded polypeptide.. Together with its co-chaperonin GroES, plays an essential role in assisting protein folding. The GroEL-GroES system forms a nano-cage that allows encapsulation of the non-native substrate proteins and provides a physical environment optimized to promote and accelerate protein folding. The polypeptide is Chaperonin GroEL 2 (Synechococcus sp. (strain WH7803)).